The primary structure comprises 408 residues: Zinc chaperone AztD (408 aa).

The first 21 residues, 1 to 21, serve as a signal peptide directing secretion; it reads MLRHLAGASALALTLAGAGFA. The N-terminal Zn(2+)-binding motif; binds a third Zn(2+) with low affinity motif lies at 23-29; that stretch reads DHDHDHE. The Zn(2+) site is built by histidine 99, histidine 102, aspartate 104, histidine 124, histidine 167, histidine 218, and histidine 408. Cysteine 214 and cysteine 231 are oxidised to a cystine.

As to quaternary structure, monomer.

The protein localises to the periplasm. Acts as a zinc chaperone in the AztABCD zinc transport system. Directly transfers one zinc cation to the solute binding protein AztC; the transfer occurs without the formation of a stable interaction. Binds 3 Zn(2+), two with high affinity and one with low affinity, and transfers only Zn(2+) bound to site 2 to AztC. Likely functions to store zinc in the periplasm and may be important for zinc accumulation in zinc-limited environments. This is Zinc chaperone AztD from Paracoccus denitrificans (strain Pd 1222).